Reading from the N-terminus, the 86-residue chain is uncharacterized protein (86 aa).

The next 2 membrane-spanning stretches (helical) occupy residues 20–38 (IQFW…SVYL) and 47–63 (FSTF…TKGV). The segment at 67 to 86 (LSQRREQGKEQGREQGREQE) is disordered. The span at 69–86 (QRREQGKEQGREQGREQE) shows a compositional bias: basic and acidic residues.

It is found in the cell membrane. This is an uncharacterized protein from Haemophilus influenzae (strain ATCC 51907 / DSM 11121 / KW20 / Rd).